The sequence spans 450 residues: Deoxyguanosinetriphosphate triphosphohydrolase-like protein (450 aa).

Residues 61–274 (RLTHSLEVAQ…MELADDIAYA (214 aa)) enclose the HD domain.

The protein belongs to the dGTPase family. Type 2 subfamily.

This chain is Deoxyguanosinetriphosphate triphosphohydrolase-like protein, found in Histophilus somni (strain 2336) (Haemophilus somnus).